Here is a 271-residue protein sequence, read N- to C-terminus: Tryptophan synthase alpha chain (271 aa).

Residues glutamate 49 and aspartate 60 each act as proton acceptor in the active site.

It belongs to the TrpA family. Tetramer of two alpha and two beta chains.

The catalysed reaction is (1S,2R)-1-C-(indol-3-yl)glycerol 3-phosphate + L-serine = D-glyceraldehyde 3-phosphate + L-tryptophan + H2O. Its pathway is amino-acid biosynthesis; L-tryptophan biosynthesis; L-tryptophan from chorismate: step 5/5. Its function is as follows. The alpha subunit is responsible for the aldol cleavage of indoleglycerol phosphate to indole and glyceraldehyde 3-phosphate. This Burkholderia cenocepacia (strain HI2424) protein is Tryptophan synthase alpha chain.